Consider the following 463-residue polypeptide: Phosphomethylpyrimidine synthase (463 aa).

Substrate-binding positions include Asn80, Met109, Tyr138, His173, 193–195, 234–237, and Glu273; these read SRG and DGLR. His277 serves as a coordination point for Zn(2+). Tyr300 lines the substrate pocket. Zn(2+) is bound at residue His341. [4Fe-4S] cluster is bound by residues Cys421, Cys424, and Cys429.

This sequence belongs to the ThiC family. Homodimer. [4Fe-4S] cluster is required as a cofactor.

It carries out the reaction 5-amino-1-(5-phospho-beta-D-ribosyl)imidazole + S-adenosyl-L-methionine = 4-amino-2-methyl-5-(phosphooxymethyl)pyrimidine + CO + 5'-deoxyadenosine + formate + L-methionine + 3 H(+). It participates in cofactor biosynthesis; thiamine diphosphate biosynthesis. Its function is as follows. Catalyzes the synthesis of the hydroxymethylpyrimidine phosphate (HMP-P) moiety of thiamine from aminoimidazole ribotide (AIR) in a radical S-adenosyl-L-methionine (SAM)-dependent reaction. This Anaeromyxobacter dehalogenans (strain 2CP-1 / ATCC BAA-258) protein is Phosphomethylpyrimidine synthase.